The primary structure comprises 335 residues: Eukaryotic translation initiation factor 3 subunit I (335 aa).

WD repeat units lie at residues 8 to 47, 50 to 91, 145 to 184, 189 to 228, and 286 to 325; these read GHERALTQIRYNRDGDIIFSTAKDQHICAWYAHNGERLGT, GHQG…KTWD, CAESKATVAGWSYMSKYIIAGHEDGSVSQYDAKTGELLFN, EPDLQVTDLQWSPDRTYFITASKDKTAKLVNARDLEVMKT, and GHFGPLNTVAVDPNGKGYASGGEDGYVRVHQFDKGYFDFT.

The protein belongs to the eIF-3 subunit I family. As to quaternary structure, component of the eukaryotic translation initiation factor 3 (eIF-3) complex.

The protein localises to the cytoplasm. Functionally, component of the eukaryotic translation initiation factor 3 (eIF-3) complex, which is involved in protein synthesis of a specialized repertoire of mRNAs and, together with other initiation factors, stimulates binding of mRNA and methionyl-tRNAi to the 40S ribosome. The eIF-3 complex specifically targets and initiates translation of a subset of mRNAs involved in cell proliferation. This chain is Eukaryotic translation initiation factor 3 subunit I (tif34), found in Botryotinia fuckeliana (strain B05.10) (Noble rot fungus).